A 405-amino-acid chain; its full sequence is S-adenosylmethionine synthase (405 aa).

An ATP-binding site is contributed by 139–144 (GQGSVD).

It belongs to the AdoMet synthase 2 family. Mg(2+) is required as a cofactor.

The catalysed reaction is L-methionine + ATP + H2O = S-adenosyl-L-methionine + phosphate + diphosphate. It participates in amino-acid biosynthesis; S-adenosyl-L-methionine biosynthesis; S-adenosyl-L-methionine from L-methionine: step 1/1. Catalyzes the formation of S-adenosylmethionine from methionine and ATP. The polypeptide is S-adenosylmethionine synthase (Thermococcus gammatolerans (strain DSM 15229 / JCM 11827 / EJ3)).